Consider the following 202-residue polypeptide: ATP-dependent Clp protease proteolytic subunit (202 aa).

Residue Ser101 is the Nucleophile of the active site. His126 is a catalytic residue.

Belongs to the peptidase S14 family. As to quaternary structure, component of the chloroplastic Clp protease core complex.

The protein localises to the plastid. The protein resides in the chloroplast stroma. The enzyme catalyses Hydrolysis of proteins to small peptides in the presence of ATP and magnesium. alpha-casein is the usual test substrate. In the absence of ATP, only oligopeptides shorter than five residues are hydrolyzed (such as succinyl-Leu-Tyr-|-NHMec, and Leu-Tyr-Leu-|-Tyr-Trp, in which cleavage of the -Tyr-|-Leu- and -Tyr-|-Trp bonds also occurs).. Functionally, cleaves peptides in various proteins in a process that requires ATP hydrolysis. Has a chymotrypsin-like activity. Plays a major role in the degradation of misfolded proteins. The sequence is that of ATP-dependent Clp protease proteolytic subunit from Platanus occidentalis (Sycamore).